The chain runs to 210 residues: Large ribosomal subunit protein uL4 (210 aa).

Positions 41–52 (MNNARQGTASSK) are enriched in polar residues. The interval 41–80 (MNNARQGTASSKTRSEVRGGGRKPWRQKGTGRARAGSSRS) is disordered. A compositionally biased stretch (basic residues) spans 60 to 71 (GGRKPWRQKGTG).

The protein belongs to the universal ribosomal protein uL4 family. In terms of assembly, part of the 50S ribosomal subunit.

In terms of biological role, one of the primary rRNA binding proteins, this protein initially binds near the 5'-end of the 23S rRNA. It is important during the early stages of 50S assembly. It makes multiple contacts with different domains of the 23S rRNA in the assembled 50S subunit and ribosome. Its function is as follows. Forms part of the polypeptide exit tunnel. The chain is Large ribosomal subunit protein uL4 from Acaryochloris marina (strain MBIC 11017).